Consider the following 81-residue polypeptide: Photosystem I iron-sulfur center (81 aa).

4Fe-4S ferredoxin-type domains are found at residues 2-31 (SHSV…MVPW) and 37-68 (GQIA…VRVY). Cys-11, Cys-14, Cys-17, Cys-21, Cys-48, Cys-51, Cys-54, and Cys-58 together coordinate [4Fe-4S] cluster.

In terms of assembly, the eukaryotic PSI reaction center is composed of at least 11 subunits. [4Fe-4S] cluster is required as a cofactor.

Its subcellular location is the plastid. The protein resides in the chloroplast thylakoid membrane. The catalysed reaction is reduced [plastocyanin] + hnu + oxidized [2Fe-2S]-[ferredoxin] = oxidized [plastocyanin] + reduced [2Fe-2S]-[ferredoxin]. Functionally, apoprotein for the two 4Fe-4S centers FA and FB of photosystem I (PSI); essential for photochemical activity. FB is the terminal electron acceptor of PSI, donating electrons to ferredoxin. The C-terminus interacts with PsaA/B/D and helps assemble the protein into the PSI complex. Required for binding of PsaD and PsaE to PSI. PSI is a plastocyanin/cytochrome c6-ferredoxin oxidoreductase, converting photonic excitation into a charge separation, which transfers an electron from the donor P700 chlorophyll pair to the spectroscopically characterized acceptors A0, A1, FX, FA and FB in turn. This Euglena gracilis protein is Photosystem I iron-sulfur center.